The sequence spans 89 residues: Large ribosomal subunit protein uL24 (89 aa).

Belongs to the universal ribosomal protein uL24 family. As to quaternary structure, part of the 50S ribosomal subunit.

One of two assembly initiator proteins, it binds directly to the 5'-end of the 23S rRNA, where it nucleates assembly of the 50S subunit. Its function is as follows. One of the proteins that surrounds the polypeptide exit tunnel on the outside of the subunit. In Chlorobium chlorochromatii (strain CaD3), this protein is Large ribosomal subunit protein uL24.